A 301-amino-acid chain; its full sequence is Probable alpha-L-glutamate ligase 1 (301 aa).

The 184-residue stretch at 104-287 folds into the ATP-grasp domain; it reads LQLLSRKGIG…VTEPIVEYIE (184 aa). ATP contacts are provided by residues Lys141, 178-179, Asp187, and 211-213; these read EY and RSN. Asp248, Glu260, and Asn262 together coordinate Mg(2+). The Mn(2+) site is built by Asp248, Glu260, and Asn262.

This sequence belongs to the RimK family. Mg(2+) is required as a cofactor. Mn(2+) serves as cofactor.

This chain is Probable alpha-L-glutamate ligase 1, found in Shewanella oneidensis (strain ATCC 700550 / JCM 31522 / CIP 106686 / LMG 19005 / NCIMB 14063 / MR-1).